The sequence spans 251 residues: 3-deoxy-manno-octulosonate cytidylyltransferase (251 aa).

The protein belongs to the KdsB family.

The protein resides in the cytoplasm. It catalyses the reaction 3-deoxy-alpha-D-manno-oct-2-ulosonate + CTP = CMP-3-deoxy-beta-D-manno-octulosonate + diphosphate. Its pathway is nucleotide-sugar biosynthesis; CMP-3-deoxy-D-manno-octulosonate biosynthesis; CMP-3-deoxy-D-manno-octulosonate from 3-deoxy-D-manno-octulosonate and CTP: step 1/1. It functions in the pathway bacterial outer membrane biogenesis; lipopolysaccharide biosynthesis. Functionally, activates KDO (a required 8-carbon sugar) for incorporation into bacterial lipopolysaccharide in Gram-negative bacteria. The chain is 3-deoxy-manno-octulosonate cytidylyltransferase from Rhizobium leguminosarum bv. trifolii (strain WSM2304).